The chain runs to 333 residues: Mevalonate kinase (333 aa).

An ATP-binding site is contributed by 109-119 (PVGAGLGSSAA). Catalysis depends on Asp160, which acts as the Proton acceptor.

It belongs to the GHMP kinase family. Mevalonate kinase subfamily. Homodimer. The cofactor is Mg(2+).

The protein localises to the cytoplasm. It carries out the reaction (R)-mevalonate + ATP = (R)-5-phosphomevalonate + ADP + H(+). It participates in isoprenoid biosynthesis; isopentenyl diphosphate biosynthesis via mevalonate pathway; isopentenyl diphosphate from (R)-mevalonate: step 1/3. Its function is as follows. Catalyzes the phosphorylation of (R)-mevalonate (MVA) to (R)-mevalonate 5-phosphate (MVAP). Functions in the mevalonate (MVA) pathway leading to isopentenyl diphosphate (IPP), a key precursor for the biosynthesis of isoprenoid compounds such as archaeal membrane lipids. The chain is Mevalonate kinase from Thermococcus sibiricus (strain DSM 12597 / MM 739).